A 92-amino-acid chain; its full sequence is Acyl-CoA-binding domain-containing protein 6 (92 aa).

Residues 3–88 (LKEEFEEHAE…VKQLLEVAAS (86 aa)) enclose the ACB domain. Residues 30–34 (YGLYK), lysine 52, lysine 56, and tyrosine 75 contribute to the an acyl-CoA site.

Belongs to the ACBP family. Interacts with PDLP8. In terms of tissue distribution, mostly expressed in seeds, stems, and siliques, and, to a lower extent, in leaves, flowers, and roots (at protein level). Highly expressed in root and shoot phloem companion cells.

Its subcellular location is the cytoplasm. The protein localises to the cell membrane. Its function is as follows. Binds medium- and long-chain acyl-CoA esters with very high affinity. May function as an intracellular carrier of acyl-CoA esters. Confers resistance to cold and freezing. Interacts with phosphatidylcholine and derivatives, but not phosphatidic acid and lysophosphatidylcholine. May be involved in phospholipid metabolism. The protein is Acyl-CoA-binding domain-containing protein 6 (ACBP6) of Arabidopsis thaliana (Mouse-ear cress).